We begin with the raw amino-acid sequence, 194 residues long: 3-isopropylmalate dehydratase small subunit (194 aa).

The protein belongs to the LeuD family. LeuD type 1 subfamily. Heterodimer of LeuC and LeuD.

The catalysed reaction is (2R,3S)-3-isopropylmalate = (2S)-2-isopropylmalate. It participates in amino-acid biosynthesis; L-leucine biosynthesis; L-leucine from 3-methyl-2-oxobutanoate: step 2/4. Functionally, catalyzes the isomerization between 2-isopropylmalate and 3-isopropylmalate, via the formation of 2-isopropylmaleate. In Brevibacillus brevis (strain 47 / JCM 6285 / NBRC 100599), this protein is 3-isopropylmalate dehydratase small subunit.